We begin with the raw amino-acid sequence, 153 residues long: MALELALDLQFAVNPGNLPTEAEFETWVRVALGDTLDEAELTIRIVDATESQQLNRDYRGKDKPTNVLSFPFEAPPGMELPLLGDLVICASVVENEALEQHKALEAHWAHMVVHGCLHLLGYDHIDDAEAEEMEALETTLLTGLGYPDPYKEQ.

Zn(2+)-binding residues include H114, H118, and H124.

Belongs to the endoribonuclease YbeY family. Zn(2+) is required as a cofactor.

The protein localises to the cytoplasm. In terms of biological role, single strand-specific metallo-endoribonuclease involved in late-stage 70S ribosome quality control and in maturation of the 3' terminus of the 16S rRNA. The polypeptide is Endoribonuclease YbeY (Shewanella amazonensis (strain ATCC BAA-1098 / SB2B)).